We begin with the raw amino-acid sequence, 631 residues long: tRNA uridine 5-carboxymethylaminomethyl modification enzyme MnmG (631 aa).

15–20 (GAGHAG) is an FAD binding site. Residues 203 to 232 (TPPRVDGNTVDYSKTQEEPGDKEPRHFSYT) form a disordered region. A compositionally biased stretch (basic and acidic residues) spans 216 to 232 (KTQEEPGDKEPRHFSYT). 276 to 290 (GPRYCPSIEDKVVRF) is a binding site for NAD(+).

It belongs to the MnmG family. Homodimer. Heterotetramer of two MnmE and two MnmG subunits. The cofactor is FAD.

Its subcellular location is the cytoplasm. Its function is as follows. NAD-binding protein involved in the addition of a carboxymethylaminomethyl (cmnm) group at the wobble position (U34) of certain tRNAs, forming tRNA-cmnm(5)s(2)U34. The sequence is that of tRNA uridine 5-carboxymethylaminomethyl modification enzyme MnmG from Lactobacillus gasseri (strain ATCC 33323 / DSM 20243 / BCRC 14619 / CIP 102991 / JCM 1131 / KCTC 3163 / NCIMB 11718 / NCTC 13722 / AM63).